Consider the following 79-residue polypeptide: Cell division protein ZapB (79 aa).

A coiled-coil region spans residues 4–78 (EVFEKLEAKV…LRALLGKMEE (75 aa)).

Belongs to the ZapB family. Homodimer. The ends of the coiled-coil dimer bind to each other, forming polymers. Interacts with FtsZ.

It localises to the cytoplasm. Its function is as follows. Non-essential, abundant cell division factor that is required for proper Z-ring formation. It is recruited early to the divisome by direct interaction with FtsZ, stimulating Z-ring assembly and thereby promoting cell division earlier in the cell cycle. Its recruitment to the Z-ring requires functional FtsA or ZipA. The protein is Cell division protein ZapB of Pectobacterium atrosepticum (strain SCRI 1043 / ATCC BAA-672) (Erwinia carotovora subsp. atroseptica).